Here is a 70-residue protein sequence, read N- to C-terminus: Large ribosomal subunit protein uL29 (70 aa).

It belongs to the universal ribosomal protein uL29 family.

The chain is Large ribosomal subunit protein uL29 from Clostridium botulinum (strain Eklund 17B / Type B).